The chain runs to 258 residues: Axonemal dynein light intermediate polypeptide 1 (258 aa).

Disordered regions lie at residues 19-60 and 207-231; these read RNTE…CVPD and VNEQ…EEKK. Residues 34 to 48 are compositionally biased toward low complexity; sequence SPQQPGPSGSAPQLP. Positions 176 to 255 form a coiled coil; sequence MRKALQAEQG…LKAQLEGIIA (80 aa).

The protein belongs to the inner dynein arm light chain family. As to quaternary structure, interacts with CFAP45. Interacts with DYNC1H1.

It localises to the cell projection. Its subcellular location is the cilium. The protein resides in the flagellum. The protein localises to the dynein axonemal particle. It is found in the cytoplasm. Its function is as follows. Involved in sperm flagellum assembly. The protein is Axonemal dynein light intermediate polypeptide 1 (DNALI1) of Macaca fascicularis (Crab-eating macaque).